Here is a 546-residue protein sequence, read N- to C-terminus: uncharacterized protein (546 aa).

10 consecutive transmembrane segments (helical) span residues 106 to 126, 145 to 165, 172 to 192, 231 to 251, 263 to 283, 332 to 352, 375 to 395, 416 to 436, 444 to 464, and 510 to 530; these read WWIV…SSVY, TLGS…FAPL, FIIY…GGCA, YVLP…PIIG, WTFW…FIFF, LIFT…VYII, GLSF…TPFI, LYPL…FAWT, WIVP…VFFV, and WATS…FIFY.

The protein belongs to the major facilitator superfamily. CAR1 family.

The protein resides in the endoplasmic reticulum membrane. This is an uncharacterized protein from Schizosaccharomyces pombe (strain 972 / ATCC 24843) (Fission yeast).